We begin with the raw amino-acid sequence, 446 residues long: Tubulin beta-8 chain (446 aa).

8 residues coordinate GTP: Gln-11, Glu-69, Ser-138, Gly-142, Thr-143, Gly-144, Asn-204, and Asn-226. Residue Glu-69 coordinates Mg(2+). Positions 426 to 446 (QDATAEDDYDEDDDAAAADEA) are disordered. Positions 429 to 446 (TAEDDYDEDDDAAAADEA) are enriched in acidic residues.

It belongs to the tubulin family. In terms of assembly, dimer of alpha and beta chains. A typical microtubule is a hollow water-filled tube with an outer diameter of 25 nm and an inner diameter of 15 nM. Alpha-beta heterodimers associate head-to-tail to form protofilaments running lengthwise along the microtubule wall with the beta-tubulin subunit facing the microtubule plus end conferring a structural polarity. Microtubules usually have 13 protofilaments but different protofilament numbers can be found in some organisms and specialized cells. The cofactor is Mg(2+). Expressed in anthers.

It localises to the cytoplasm. Its subcellular location is the cytoskeleton. Functionally, tubulin is the major constituent of microtubules, a cylinder consisting of laterally associated linear protofilaments composed of alpha- and beta-tubulin heterodimers. Microtubules grow by the addition of GTP-tubulin dimers to the microtubule end, where a stabilizing cap forms. Below the cap, tubulin dimers are in GDP-bound state, owing to GTPase activity of alpha-tubulin. The sequence is that of Tubulin beta-8 chain (TUBB8) from Oryza sativa subsp. japonica (Rice).